Consider the following 179-residue polypeptide: Small ribosomal subunit protein uS5 (179 aa).

The 64-residue stretch at 22–85 (MIEKLVAVNR…EYARKRMSNV (64 aa)) folds into the S5 DRBM domain.

This sequence belongs to the universal ribosomal protein uS5 family. In terms of assembly, part of the 30S ribosomal subunit. Contacts proteins S4 and S8.

With S4 and S12 plays an important role in translational accuracy. Its function is as follows. Located at the back of the 30S subunit body where it stabilizes the conformation of the head with respect to the body. This is Small ribosomal subunit protein uS5 from Xylella fastidiosa (strain M23).